The chain runs to 134 residues: Cytochrome b5 isoform B (134 aa).

The region spanning 5 to 81 (AKIFTLSEVS…MEQYYVGEID (77 aa)) is the Cytochrome b5 heme-binding domain. The heme site is built by His40 and His64. The helical transmembrane segment at 107 to 127 (FIIKLLQFLVPLAILGLAVGI) threads the bilayer.

The protein belongs to the cytochrome b5 family. Interacts with CER1, FAH1, FAH2 and BI-1.

It localises to the endoplasmic reticulum membrane. Membrane bound hemoprotein which function as an electron carrier for several membrane bound oxygenases, including fatty acid desaturases. The sequence is that of Cytochrome b5 isoform B from Arabidopsis thaliana (Mouse-ear cress).